Reading from the N-terminus, the 149-residue chain is Large ribosomal subunit protein uL11 (149 aa).

Belongs to the universal ribosomal protein uL11 family. As to quaternary structure, part of the ribosomal stalk of the 50S ribosomal subunit. Interacts with L10 and the large rRNA to form the base of the stalk. L10 forms an elongated spine to which L12 dimers bind in a sequential fashion forming a multimeric L10(L12)X complex. In terms of processing, one or more lysine residues are methylated.

Its function is as follows. Forms part of the ribosomal stalk which helps the ribosome interact with GTP-bound translation factors. The polypeptide is Large ribosomal subunit protein uL11 (Azorhizobium caulinodans (strain ATCC 43989 / DSM 5975 / JCM 20966 / LMG 6465 / NBRC 14845 / NCIMB 13405 / ORS 571)).